We begin with the raw amino-acid sequence, 454 residues long: Aspartokinase 3 (454 aa).

ACT domains are found at residues 312–388 (ISKY…ALIM) and 389–454 (VVGE…VLIS).

It belongs to the aspartokinase family. Monomer.

The catalysed reaction is L-aspartate + ATP = 4-phospho-L-aspartate + ADP. It participates in amino-acid biosynthesis; L-lysine biosynthesis via DAP pathway; (S)-tetrahydrodipicolinate from L-aspartate: step 1/4. The protein operates within amino-acid biosynthesis; L-methionine biosynthesis via de novo pathway; L-homoserine from L-aspartate: step 1/3. Its pathway is amino-acid biosynthesis; L-threonine biosynthesis; L-threonine from L-aspartate: step 1/5. In terms of biological role, catalyzes the phosphorylation of the beta-carboxyl group of aspartic acid with ATP to yield 4-phospho-L-aspartate, which is involved in the branched biosynthetic pathway leading to the biosynthesis of amino acids threonine, isoleucine and methionine. The sequence is that of Aspartokinase 3 (yclM) from Bacillus subtilis (strain 168).